Here is a 1239-residue protein sequence, read N- to C-terminus: Inner tegument protein (1239 aa).

The span at 1–10 shows a compositional bias: low complexity; the sequence is MASAMESDSS. Disordered regions lie at residues 1–20, 672–708, and 1090–1239; these read MASA…DAQP, GESP…GGPW, and GRNA…AEDE. Positions 618–1239 are interaction with large tegument protein; that stretch reads NELPKTRSLA…RPPRPTAEDE (622 aa). The segment covering 1115–1126 has biased composition (low complexity); the sequence is DSSPFSFSSSDF. Over residues 1127-1136 the composition is skewed to acidic residues; the sequence is SDQDEGEGGE. Over residues 1181–1190 the composition is skewed to low complexity; it reads RTTPSPSRRA. Over residues 1219–1232 the composition is skewed to basic residues; it reads VRPRTRRGATRRPP.

The protein belongs to the herpesviridae inner tegument protein family. Interacts (via C-terminus) with the large tegument protein/LTP (via N-terminus).

It is found in the virion tegument. The protein resides in the host cytoplasm. The protein localises to the host nucleus. Its subcellular location is the host Golgi apparatus. It localises to the host trans-Golgi network. In terms of biological role, plays an essential role in cytoplasmic secondary envelopment during viral egress. Interacts with the capsid via the large tegument protein/LTP and participates in its transport to the host trans-Golgi network (TGN) where secondary envelopment occurs. Modulates tegumentation and capsid accumulation at the viral assembly complex. This chain is Inner tegument protein, found in Homo sapiens (Human).